The primary structure comprises 430 residues: Tol-Pal system protein TolB (430 aa).

A signal peptide spans 1–21 (MKQALRVAFGFLILWASVLHA).

It belongs to the TolB family. As to quaternary structure, the Tol-Pal system is composed of five core proteins: the inner membrane proteins TolA, TolQ and TolR, the periplasmic protein TolB and the outer membrane protein Pal. They form a network linking the inner and outer membranes and the peptidoglycan layer.

The protein localises to the periplasm. Functionally, part of the Tol-Pal system, which plays a role in outer membrane invagination during cell division and is important for maintaining outer membrane integrity. TolB occupies a key intermediary position in the Tol-Pal system because it communicates directly with both membrane-embedded components, Pal in the outer membrane and TolA in the inner membrane. This chain is Tol-Pal system protein TolB, found in Shigella flexneri.